A 354-amino-acid polypeptide reads, in one-letter code: Replication-associated protein (354 aa).

Residues S11–F114 form the CRESS-DNA virus Rep endonuclease domain. The short motif at F18–Y21 is the RCR-1 element. The a divalent metal cation site is built by E52 and H62. The short motif at C60 to I65 is the RCR-2 element. The active-site For DNA cleavage activity is Y100. The RCR-3 signature appears at Y100–K103. E104 is an a divalent metal cation binding site. The interval S175–F187 is oligomerization. G228–S235 lines the ATP pocket. Residues V251 to P269 are transactivation. The Nuclear localization signal signature appears at K291–S302.

The protein belongs to the geminiviridae Rep protein family. Homooligomer. Rep binds to repeated DNA motifs (iterons). Forms the O-complex, which is a Rep-DNA complex involved in the initiation of RCR. Part of the C- and V-complexes which are RepA-Rep-DNA complexes involved in the c-sense and v-sense transcription. It depends on Mg(2+) as a cofactor. Mn(2+) is required as a cofactor.

The protein localises to the host nucleus. In terms of biological role, essential for the replication of viral ssDNA. The closed circular ssDNA genome is first converted to a superhelical dsDNA. Rep binds a specific region at the genome origin of replication. It introduces an endonucleolytic nick within the conserved sequence 5'-TAATATTAC-3' in the intergenic region of the genome present in all geminiviruses, thereby initiating the rolling circle replication (RCR). Following cleavage, binds covalently to the 5'-phosphate of DNA as a tyrosyl ester. The cleavage gives rise to a free 3'-OH that serves as a primer for the cellular DNA polymerase. The polymerase synthesizes the (+) strand DNA by rolling circle mechanism. After one round of replication, a Rep-catalyzed nucleotidyl transfer reaction releases a circular single-stranded virus genome, thereby terminating the replication. Displays origin-specific DNA cleavage, nucleotidyl transferase, ATPase and helicase activities. Acts as an inhibitor of C-sense gene transcription. This is Replication-associated protein from Maize streak virus genotype C (isolate Set) (MSV).